Reading from the N-terminus, the 100-residue chain is Pregnancy-associated protein bPAP (100 aa).

Positions Asp1 to Leu40 are disordered. Residues Pro13–Xaa29 are compositionally biased toward low complexity.

Detected at high levels in the urine of pregnant females (at protein level) and at far lower levels in the urine of nonpregnant females.

This Bos taurus (Bovine) protein is Pregnancy-associated protein bPAP.